The sequence spans 152 residues: Transcriptional regulator MraZ (152 aa).

SpoVT-AbrB domains lie at 5 to 52 (ASAI…PIHE) and 81 to 124 (AHEV…DEQS).

Belongs to the MraZ family. As to quaternary structure, forms oligomers.

The protein resides in the cytoplasm. Its subcellular location is the nucleoid. The sequence is that of Transcriptional regulator MraZ from Shewanella baltica (strain OS223).